The primary structure comprises 575 residues: MDGDRGKRDSYWSTSPSGSTTKLASGWERSSKVDTWLLILSFTQWALSIATVIICIIISARQGYSMKEYSMTVEALNMSSREVKESLTSLIRQEVIARAVNIQSSVQTGIPVLLNKNSRDVIQMIDKSCSRQELTQLCESTIAVHHAEGIAPLEPHSFWRCPVGEPYLSSDPKISLLPGPSLLSGSTTISGCVRLPSLSIGEAIYAYSSNLITQGCADIGKSYQVLQLGYISLNSDMFPDLNPVVSHTYDINDNRKSCSVVATGTRGYQLCSMPTVDERTDYSSDGIEDLVLDVLDLKGSTKSHRYRNSEVDLDHPFSALYPSVGNGIATEGSLIFLGYGGLTTPLQGDTKCRTQGCQQVSQDTCNEALKITWLGGKQVVSVIIQVNDYLSERPKIRVTTIPITQNYLGAEGRLLKLGDRVYIYTRSSGWHSQLQIGVLDVSHPLTINWTPHEALSRPGNEECNWYNTCPKECISGVYTDAYPLSPDAANVATVTLYANTSRVNPTIMYSNTTNIINMLRIKDVQLEAAYTTTSCITHFGKGYCFHIIEINQKSLNTLQPMLFKTSIPKLCKAES.

Residues 1 to 10 (MDGDRGKRDS) show a composition bias toward basic and acidic residues. The disordered stretch occupies residues 1–24 (MDGDRGKRDSYWSTSPSGSTTKLA). The Intravirion segment spans residues 1–37 (MDGDRGKRDSYWSTSPSGSTTKLASGWERSSKVDTWL). The tract at residues 10–14 (SYWST) is incorporation in virion. Residues 11–23 (YWSTSPSGSTTKL) are compositionally biased toward polar residues. Residues 38–58 (LILSFTQWALSIATVIICIII) traverse the membrane as a helical segment. The tract at residues 59–140 (SARQGYSMKE…RQELTQLCES (82 aa)) is involved in interaction with F protein. The Virion surface segment spans residues 59–575 (SARQGYSMKE…SIPKLCKAES (517 aa)). A glycan (N-linked (GlcNAc...) asparagine; by host) is linked at N77. Cystine bridges form between C192–C216, C258–C271, C357–C469, and C463–C473. The involved in neuraminidase activity stretch occupies residues 254–259 (NRKSCS). N-linked (GlcNAc...) asparagine; by host glycans are attached at residues N499 and N511. C535 and C544 are joined by a disulfide.

This sequence belongs to the paramyxoviruses hemagglutinin-neuraminidase family. As to quaternary structure, homotetramer; composed of disulfide-linked homodimers. Interacts with F protein trimer. N-glycosylated; glycans consist of a mixture of high mannose-type oligosaccharides and of complex-type oligosaccharides.

The protein resides in the virion membrane. It localises to the host cell membrane. It catalyses the reaction Hydrolysis of alpha-(2-&gt;3)-, alpha-(2-&gt;6)-, alpha-(2-&gt;8)- glycosidic linkages of terminal sialic acid residues in oligosaccharides, glycoproteins, glycolipids, colominic acid and synthetic substrates.. Functionally, attaches the virus to sialic acid-containing cell receptors and thereby initiating infection. Binding of HN protein to the receptor induces a conformational change that allows the F protein to trigger virion/cell membranes fusion. Neuraminidase activity ensures the efficient spread of the virus by dissociating the mature virions from the neuraminic acid containing glycoproteins. In Sendai virus (strain Fushimi) (SeV), this protein is Hemagglutinin-neuraminidase (HN).